The following is a 261-amino-acid chain: Ribosomal RNA small subunit methyltransferase A (261 aa).

N11, L13, G38, E59, D84, and S106 together coordinate S-adenosyl-L-methionine.

It belongs to the class I-like SAM-binding methyltransferase superfamily. rRNA adenine N(6)-methyltransferase family. RsmA subfamily.

The protein localises to the cytoplasm. It carries out the reaction adenosine(1518)/adenosine(1519) in 16S rRNA + 4 S-adenosyl-L-methionine = N(6)-dimethyladenosine(1518)/N(6)-dimethyladenosine(1519) in 16S rRNA + 4 S-adenosyl-L-homocysteine + 4 H(+). Specifically dimethylates two adjacent adenosines (A1518 and A1519) in the loop of a conserved hairpin near the 3'-end of 16S rRNA in the 30S particle. May play a critical role in biogenesis of 30S subunits. The sequence is that of Ribosomal RNA small subunit methyltransferase A from Wigglesworthia glossinidia brevipalpis.